The primary structure comprises 632 residues: uncharacterized protein (632 aa).

The next 4 helical transmembrane spans lie at 255–275 (LFYA…ELRV), 506–526 (IALL…LTSI), 566–586 (MIFA…SMVF), and 603–623 (IVVI…AVLF).

It localises to the cell membrane. This is an uncharacterized protein from Mycoplasma pneumoniae (strain ATCC 29342 / M129 / Subtype 1) (Mycoplasmoides pneumoniae).